The sequence spans 264 residues: Undecaprenyl-diphosphatase (264 aa).

The next 7 membrane-spanning stretches (helical) occupy residues 38-58 (RSDF…VLVF), 75-95 (REYV…GLVV), 106-126 (VSPV…VEAY), 136-156 (VTWT…VFPG), 181-201 (FVFL…FLEM), 217-237 (VAFL…MGYI), and 242-262 (FTAF…WLPS).

The protein belongs to the UppP family.

It is found in the cell membrane. The enzyme catalyses di-trans,octa-cis-undecaprenyl diphosphate + H2O = di-trans,octa-cis-undecaprenyl phosphate + phosphate + H(+). Catalyzes the dephosphorylation of undecaprenyl diphosphate (UPP). Confers resistance to bacitracin. The polypeptide is Undecaprenyl-diphosphatase (Stenotrophomonas maltophilia (strain K279a)).